The chain runs to 381 residues: Putative F-box protein At3g17500 (381 aa).

Positions 1-45 (MMSNLPLDLVEEILSRVPATSLKRLRSTCKSWNNCYKDQRFTEKH) constitute an F-box domain.

The chain is Putative F-box protein At3g17500 from Arabidopsis thaliana (Mouse-ear cress).